We begin with the raw amino-acid sequence, 598 residues long: Aspartate--tRNA(Asp/Asn) ligase (598 aa).

E177 contributes to the L-aspartate binding site. The aspartate stretch occupies residues 201 to 204; it reads QLFK. R223 lines the L-aspartate pocket. Residues 223–225 and Q232 contribute to the ATP site; that span reads RDE. Residue H456 coordinates L-aspartate. An ATP-binding site is contributed by E493. R500 is a binding site for L-aspartate. ATP is bound at residue 545 to 548; the sequence is GLDR.

Belongs to the class-II aminoacyl-tRNA synthetase family. Type 1 subfamily. Homodimer.

Its subcellular location is the cytoplasm. The catalysed reaction is tRNA(Asx) + L-aspartate + ATP = L-aspartyl-tRNA(Asx) + AMP + diphosphate. Its function is as follows. Aspartyl-tRNA synthetase with relaxed tRNA specificity since it is able to aspartylate not only its cognate tRNA(Asp) but also tRNA(Asn). Reaction proceeds in two steps: L-aspartate is first activated by ATP to form Asp-AMP and then transferred to the acceptor end of tRNA(Asp/Asn). The polypeptide is Aspartate--tRNA(Asp/Asn) ligase (Prochlorococcus marinus (strain MIT 9301)).